The chain runs to 156 residues: ATP synthase subunit b (156 aa).

Residues 7-27 (LIGQAIWFALFVFFCMKFVWP) traverse the membrane as a helical segment.

Belongs to the ATPase B chain family. In terms of assembly, F-type ATPases have 2 components, F(1) - the catalytic core - and F(0) - the membrane proton channel. F(1) has five subunits: alpha(3), beta(3), gamma(1), delta(1), epsilon(1). F(0) has three main subunits: a(1), b(2) and c(10-14). The alpha and beta chains form an alternating ring which encloses part of the gamma chain. F(1) is attached to F(0) by a central stalk formed by the gamma and epsilon chains, while a peripheral stalk is formed by the delta and b chains.

It is found in the cell inner membrane. F(1)F(0) ATP synthase produces ATP from ADP in the presence of a proton or sodium gradient. F-type ATPases consist of two structural domains, F(1) containing the extramembraneous catalytic core and F(0) containing the membrane proton channel, linked together by a central stalk and a peripheral stalk. During catalysis, ATP synthesis in the catalytic domain of F(1) is coupled via a rotary mechanism of the central stalk subunits to proton translocation. Its function is as follows. Component of the F(0) channel, it forms part of the peripheral stalk, linking F(1) to F(0). The chain is ATP synthase subunit b from Alcanivorax borkumensis (strain ATCC 700651 / DSM 11573 / NCIMB 13689 / SK2).